A 658-amino-acid polypeptide reads, in one-letter code: Probable replication factor A 73 kDa subunit (658 aa).

Disordered stretches follow at residues 134-155 (PEVK…RPNI) and 169-222 (SEFQ…TERG). The segment at residues 236–326 (FRIHGMVSRK…TLRNDSVVEA (91 aa)) is a DNA-binding region (OB). Residues 518-539 (CASEGCQKKVIESDGEYRCEKC) form a C4-type zinc finger.

Belongs to the replication factor A protein 1 family. As to quaternary structure, component of the heterotrimeric canonical replication protein A complex (RPA).

Its subcellular location is the nucleus. Functionally, as part of the heterotrimeric replication protein A complex (RPA/RP-A), binds and stabilizes single-stranded DNA intermediates, that form during DNA replication or upon DNA stress. It prevents their reannealing and in parallel, recruits and activates different proteins and complexes involved in DNA metabolism. Thereby, it plays an essential role both in DNA replication and the cellular response to DNA damage. This Caenorhabditis briggsae protein is Probable replication factor A 73 kDa subunit.